A 37-amino-acid polypeptide reads, in one-letter code: Large ribosomal subunit protein bL36 (37 aa).

This sequence belongs to the bacterial ribosomal protein bL36 family.

The chain is Large ribosomal subunit protein bL36 from Syntrophotalea carbinolica (strain DSM 2380 / NBRC 103641 / GraBd1) (Pelobacter carbinolicus).